A 506-amino-acid polypeptide reads, in one-letter code: Protein CYCLOPS (506 aa).

2 disordered regions span residues 193–223 and 385–434; these read TVNS…LDNP and KENL…RSST. Residues 202-219 show a composition bias toward low complexity; the sequence is TPSQTPTFVSPSSSSTSP. Positions 385 to 394 are enriched in basic and acidic residues; that stretch reads KENLKDDRKK. The Nuclear localization signal signature appears at 415 to 418; that stretch reads KKRR. Residues 422-432 show a composition bias toward basic and acidic residues; that stretch reads SRKMAEAKERS. A coiled-coil region spans residues 441 to 506; sequence IQVVLKRCET…IERIVSDTNT (66 aa).

It belongs to the CYCLOPS family. In terms of tissue distribution, highly epressed in roots. Expressed at very low levels in leaves, stems and panicles.

Its subcellular location is the nucleus. In terms of biological role, involved in arbuscular mycorrhizal (AM) symbiosis. Required for fungal infection in roots and arbuscule development during AM symbiosis. The protein is Protein CYCLOPS of Oryza sativa subsp. japonica (Rice).